A 260-amino-acid chain; its full sequence is Thiazole synthase (260 aa).

Catalysis depends on lysine 96, which acts as the Schiff-base intermediate with DXP. Residues glycine 157, 184-185, and 206-207 contribute to the 1-deoxy-D-xylulose 5-phosphate site; these read AG and NT.

It belongs to the ThiG family. In terms of assembly, homotetramer. Forms heterodimers with either ThiH or ThiS.

It is found in the cytoplasm. It carries out the reaction [ThiS sulfur-carrier protein]-C-terminal-Gly-aminoethanethioate + 2-iminoacetate + 1-deoxy-D-xylulose 5-phosphate = [ThiS sulfur-carrier protein]-C-terminal Gly-Gly + 2-[(2R,5Z)-2-carboxy-4-methylthiazol-5(2H)-ylidene]ethyl phosphate + 2 H2O + H(+). The protein operates within cofactor biosynthesis; thiamine diphosphate biosynthesis. In terms of biological role, catalyzes the rearrangement of 1-deoxy-D-xylulose 5-phosphate (DXP) to produce the thiazole phosphate moiety of thiamine. Sulfur is provided by the thiocarboxylate moiety of the carrier protein ThiS. In vitro, sulfur can be provided by H(2)S. The chain is Thiazole synthase from Nitrobacter hamburgensis (strain DSM 10229 / NCIMB 13809 / X14).